The chain runs to 242 residues: Succinyl-CoA:3-ketoacid coenzyme A transferase subunit A (242 aa).

33-39 (GGFGLCG) serves as a coordination point for CoA.

This sequence belongs to the 3-oxoacid CoA-transferase subunit A family. As to quaternary structure, heterodimer of a subunit A and a subunit B.

The enzyme catalyses a 3-oxo acid + succinyl-CoA = a 3-oxoacyl-CoA + succinate. It participates in bacterial outer membrane biogenesis; lipopolysaccharide biosynthesis. This Xanthomonas campestris pv. campestris (strain B100) protein is Succinyl-CoA:3-ketoacid coenzyme A transferase subunit A (lpsI).